Reading from the N-terminus, the 423-residue chain is Flotillin-1 (423 aa).

It belongs to the band 7/mec-2 family. Flotillin subfamily. Heterooligomeric complex of flotillin-1 and flotillin-2 and caveolin-1 and caveolin-2. In terms of tissue distribution, normally expressed in growing retinal exons of newly differentiated ganglion cells at the retinal margin. After optic nerve injury, expressed in all retinal ganglion cells and retinal axons. Also expressed in endothelial cells, spinal cord, larval and adult skin, muscle processes, thymus and gill macrophages.

It localises to the cell membrane. The protein localises to the endosome. It is found in the membrane. The protein resides in the caveola. Its subcellular location is the melanosome. It localises to the membrane raft. Its function is as follows. May act as a scaffolding protein within caveolar membranes, functionally participating in formation of caveolae or caveolae-like vesicles. The polypeptide is Flotillin-1 (flot1) (Carassius auratus (Goldfish)).